Here is a 242-residue protein sequence, read N- to C-terminus: Ribose-5-phosphate isomerase A (242 aa).

Residues 39-42, 95-98, and 108-111 each bind substrate; these read SGST, DGAD, and KGGG. Catalysis depends on Glu-117, which acts as the Proton acceptor. Lys-135 lines the substrate pocket.

The protein belongs to the ribose 5-phosphate isomerase family. As to quaternary structure, homodimer.

It carries out the reaction aldehydo-D-ribose 5-phosphate = D-ribulose 5-phosphate. It participates in carbohydrate degradation; pentose phosphate pathway; D-ribose 5-phosphate from D-ribulose 5-phosphate (non-oxidative stage): step 1/1. In terms of biological role, catalyzes the reversible conversion of ribose-5-phosphate to ribulose 5-phosphate. The sequence is that of Ribose-5-phosphate isomerase A from Chlamydia trachomatis serovar D (strain ATCC VR-885 / DSM 19411 / UW-3/Cx).